The sequence spans 505 residues: Katanin p60 ATPase-containing subunit A-like 2 (505 aa).

The LisH domain maps to 25–57; that stretch reads RRKNLLILIMHYLLQEGYVDSANSLEQETKISS. 2 disordered regions span residues 94–127 and 140–167; these read LDHD…IGQQ and RTNG…EASE. Polar residues-rich tracts occupy residues 114 to 127 and 155 to 164; these read GSNS…IGQQ and QESGGNSPQE. Residue 298–305 coordinates ATP; the sequence is GPPGTGKT.

This sequence belongs to the AAA ATPase family. Katanin p60 subunit A1 subfamily. A-like 2 sub-subfamily.

The protein localises to the cytoplasm. It is found in the cytoskeleton. It localises to the spindle. Its subcellular location is the spindle pole. It carries out the reaction n ATP + n H2O + a microtubule = n ADP + n phosphate + (n+1) alpha/beta tubulin heterodimers.. In terms of biological role, severs microtubules in vitro in an ATP-dependent manner. This activity may promote rapid reorganization of cellular microtubule arrays. The protein is Katanin p60 ATPase-containing subunit A-like 2 (katnal2) of Xenopus laevis (African clawed frog).